A 388-amino-acid chain; its full sequence is Chorismate synthase (388 aa).

NADP(+) is bound by residues arginine 39 and arginine 45. FMN contacts are provided by residues 130–132, 251–252, glycine 296, 311–315, and arginine 337; these read RSS, NA, and KPIPT.

This sequence belongs to the chorismate synthase family. Homotetramer. It depends on FMNH2 as a cofactor.

It carries out the reaction 5-O-(1-carboxyvinyl)-3-phosphoshikimate = chorismate + phosphate. Its pathway is metabolic intermediate biosynthesis; chorismate biosynthesis; chorismate from D-erythrose 4-phosphate and phosphoenolpyruvate: step 7/7. In terms of biological role, catalyzes the anti-1,4-elimination of the C-3 phosphate and the C-6 proR hydrogen from 5-enolpyruvylshikimate-3-phosphate (EPSP) to yield chorismate, which is the branch point compound that serves as the starting substrate for the three terminal pathways of aromatic amino acid biosynthesis. This reaction introduces a second double bond into the aromatic ring system. This chain is Chorismate synthase, found in Geobacillus sp. (strain WCH70).